We begin with the raw amino-acid sequence, 193 residues long: dCTP deaminase (193 aa).

DCTP-binding positions include 110 to 115 (RSSLAR), D128, 136 to 138 (VLE), Y171, K178, and Q182. The Proton donor/acceptor role is filled by E138. Residues 169–193 (RPYNSRQDAKYRDQQGAVASRIDKD) form a disordered region.

It belongs to the dCTP deaminase family. Homotrimer.

The catalysed reaction is dCTP + H2O + H(+) = dUTP + NH4(+). The protein operates within pyrimidine metabolism; dUMP biosynthesis; dUMP from dCTP (dUTP route): step 1/2. In terms of biological role, catalyzes the deamination of dCTP to dUTP. This chain is dCTP deaminase, found in Serratia proteamaculans (strain 568).